The following is a 161-amino-acid chain: 18.1 kDa class I heat shock protein (161 aa).

Residues 45 to 160 (DVAAFTNARV…QVKSIDISGA (116 aa)) form the sHSP domain.

It belongs to the small heat shock protein (HSP20) family. In terms of assembly, may form oligomeric structures. Binds to AKR2A.

It is found in the cytoplasm. This is 18.1 kDa class I heat shock protein (HSP18.1) from Arabidopsis thaliana (Mouse-ear cress).